The following is a 181-amino-acid chain: Adenine phosphoribosyltransferase (181 aa).

This sequence belongs to the purine/pyrimidine phosphoribosyltransferase family. As to quaternary structure, homodimer.

It is found in the cytoplasm. It catalyses the reaction AMP + diphosphate = 5-phospho-alpha-D-ribose 1-diphosphate + adenine. It functions in the pathway purine metabolism; AMP biosynthesis via salvage pathway; AMP from adenine: step 1/1. Catalyzes a salvage reaction resulting in the formation of AMP, that is energically less costly than de novo synthesis. The protein is Adenine phosphoribosyltransferase of Methylorubrum populi (strain ATCC BAA-705 / NCIMB 13946 / BJ001) (Methylobacterium populi).